Reading from the N-terminus, the 471-residue chain is Tripartite motif-containing protein 60 (471 aa).

Residues 16 to 57 form an RING-type zinc finger; the sequence is CPICLEYLKDPVTINCGHNFCRSCLSVSWKDLDDTFPCPVCR. Residues 92 to 133 form a B box-type zinc finger; the sequence is KENAMCEKHNQFLTLFCVKDLEILCTQCSFSTKHQKHYICPI. Residues cysteine 97, histidine 100, cysteine 119, and histidine 125 each contribute to the Zn(2+) site. A coiled-coil region spans residues 171-223; that stretch reads ELKKKVEYKREEINSEFEQIRLFLQNEQEMILRQIQDEEMNILAKLNENLVEL. The 194-residue stretch at 277-470 folds into the B30.2/SPRY domain; the sequence is FSLPPQYSGL…LKICSVSDSE (194 aa).

The protein belongs to the TRIM/RBCC family.

Its function is as follows. E3 SUMO-protein ligase that mediates SUMOylation of TAB2 leading to inhibition of NF-kappa-B and MAPK pathways by suppressing the TRAF6/TAB2/TAK1 complex. The protein is Tripartite motif-containing protein 60 (TRIM60) of Homo sapiens (Human).